The following is a 106-amino-acid chain: ATP-dependent Clp protease adapter protein ClpS (106 aa).

Basic and acidic residues predominate over residues 1 to 13; the sequence is MPRKTSHEHDHGL. The tract at residues 1–21 is disordered; sequence MPRKTSHEHDHGLVVETSKPE.

Belongs to the ClpS family. Binds to the N-terminal domain of the chaperone ClpA.

Functionally, involved in the modulation of the specificity of the ClpAP-mediated ATP-dependent protein degradation. This is ATP-dependent Clp protease adapter protein ClpS from Xanthomonas campestris pv. campestris (strain 8004).